A 378-amino-acid chain; its full sequence is GDP-mannose-dependent alpha-mannosyltransferase (378 aa).

Belongs to the glycosyltransferase group 1 family. Glycosyltransferase 4 subfamily.

It functions in the pathway phospholipid metabolism; phosphatidylinositol metabolism. In terms of biological role, catalyzes the addition of a mannose residue from GDP-D-mannose to GlcAGroAc2 to generate 1,2-di-O-C16/C18:1-(alpha-D-mannopyranosyl)-(1-4)-(alpha-D-glucopyranosyluronic acid)-(1-3)-glycerol(ManGlcAGroAc2). The protein is GDP-mannose-dependent alpha-mannosyltransferase (mgtA) of Mycobacterium tuberculosis (strain CDC 1551 / Oshkosh).